We begin with the raw amino-acid sequence, 602 residues long: Adenylosuccinate synthetase (602 aa).

Residues 74–80 (GDEGKGK) and 104–106 (GHT) contribute to the GTP site. Asp75 acts as the Proton acceptor in catalysis. Asp75 and Gly104 together coordinate Mg(2+). IMP contacts are provided by residues 75 to 78 (DEGK), 102 to 105 (NAGH), Thr189, Lys203, Gln315, Thr331, and Lys459. Residue His105 is the Proton donor of the active site. 455-461 (AVTKKPR) provides a ligand contact to substrate. Residues Arg461 and 589 to 591 (GNG) contribute to the GTP site.

The protein belongs to the adenylosuccinate synthetase family. In terms of assembly, homodimer. The cofactor is Mg(2+).

It is found in the cytoplasm. The catalysed reaction is IMP + L-aspartate + GTP = N(6)-(1,2-dicarboxyethyl)-AMP + GDP + phosphate + 2 H(+). The protein operates within purine metabolism; AMP biosynthesis via de novo pathway; AMP from IMP: step 1/2. In terms of biological role, plays an important role in the salvage pathway for purine nucleotide biosynthesis. Catalyzes the first committed step in the biosynthesis of AMP from IMP. The chain is Adenylosuccinate synthetase from Trypanosoma brucei brucei (strain 927/4 GUTat10.1).